The primary structure comprises 204 residues: FlaA locus 22.9 kDa protein (204 aa).

Positions 115 to 140 (EKTAEDQKKSSEDHTEGSADSKASSE) are disordered.

This is FlaA locus 22.9 kDa protein (ylxF) from Bacillus subtilis (strain 168).